Consider the following 340-residue polypeptide: DNA-directed RNA polymerase subunit alpha (340 aa).

The alpha N-terminal domain (alpha-NTD) stretch occupies residues 1 to 233 (MVREEVAVST…DLFIPFLHAE (233 aa)). Residues 266-340 (KKEIALKCIF…GIDLPKNKRF (75 aa)) form an alpha C-terminal domain (alpha-CTD) region.

It belongs to the RNA polymerase alpha chain family. In plastids the minimal PEP RNA polymerase catalytic core is composed of four subunits: alpha, beta, beta', and beta''. When a (nuclear-encoded) sigma factor is associated with the core the holoenzyme is formed, which can initiate transcription.

The protein resides in the plastid. It is found in the chloroplast. The enzyme catalyses RNA(n) + a ribonucleoside 5'-triphosphate = RNA(n+1) + diphosphate. In terms of biological role, DNA-dependent RNA polymerase catalyzes the transcription of DNA into RNA using the four ribonucleoside triphosphates as substrates. The protein is DNA-directed RNA polymerase subunit alpha of Calycanthus floridus var. glaucus (Eastern sweetshrub).